An 80-amino-acid polypeptide reads, in one-letter code: Exodeoxyribonuclease 7 small subunit (80 aa).

Belongs to the XseB family. Heterooligomer composed of large and small subunits.

It localises to the cytoplasm. It catalyses the reaction Exonucleolytic cleavage in either 5'- to 3'- or 3'- to 5'-direction to yield nucleoside 5'-phosphates.. Functionally, bidirectionally degrades single-stranded DNA into large acid-insoluble oligonucleotides, which are then degraded further into small acid-soluble oligonucleotides. The sequence is that of Exodeoxyribonuclease 7 small subunit from Vibrio parahaemolyticus serotype O3:K6 (strain RIMD 2210633).